The primary structure comprises 79 residues: Protein OPG081 (79 aa).

Residues 1–8 are Intravirion-facing; that stretch reads MVDAITVL. The helical transmembrane segment at 9–29 threads the bilayer; that stretch reads TAIGITVLMLLMVISGAAMIV. Over 30–47 the chain is Virion surface; sequence KELNPNDIFTMQSLKFNR. The chain crosses the membrane as a helical span at residues 48-68; the sequence is AVTIFKYIGLFIYIPGTIILY. At 69 to 79 the chain is on the intravirion side; it reads ATYVKSLLMKS.

It belongs to the orthopoxvirus OPG081 family.

It is found in the virion membrane. Functionally, envelope protein. The sequence is that of Protein OPG081 (OPG081) from Vaccinia virus (strain Copenhagen) (VACV).